We begin with the raw amino-acid sequence, 203 residues long: Urease accessory protein UreG (203 aa).

10–17 (GPVGAGKT) is a GTP binding site.

This sequence belongs to the SIMIBI class G3E GTPase family. UreG subfamily. In terms of assembly, homodimer. UreD, UreF and UreG form a complex that acts as a GTP-hydrolysis-dependent molecular chaperone, activating the urease apoprotein by helping to assemble the nickel containing metallocenter of UreC. The UreE protein probably delivers the nickel.

It is found in the cytoplasm. Facilitates the functional incorporation of the urease nickel metallocenter. This process requires GTP hydrolysis, probably effectuated by UreG. This Lachnoclostridium phytofermentans (strain ATCC 700394 / DSM 18823 / ISDg) (Clostridium phytofermentans) protein is Urease accessory protein UreG.